The primary structure comprises 437 residues: Enolase 2 (437 aa).

Residues His160 and Glu169 each coordinate substrate. Glu212 acts as the Proton donor in catalysis. Mg(2+) is bound by residues Asp247, Glu296, and Asp321. Positions 296 and 321 each coordinate substrate. The active-site Proton acceptor is Lys346. Substrate contacts are provided by residues 373 to 376 and Lys397; that span reads SHRS.

It belongs to the enolase family. As to quaternary structure, homodimer. The cofactor is Mg(2+).

The protein localises to the cytoplasm. It carries out the reaction (2R)-2-phosphoglycerate = phosphoenolpyruvate + H2O. Its pathway is carbohydrate degradation; glycolysis; pyruvate from D-glyceraldehyde 3-phosphate: step 4/5. The polypeptide is Enolase 2 (ENO2) (Candida glabrata (strain ATCC 2001 / BCRC 20586 / JCM 3761 / NBRC 0622 / NRRL Y-65 / CBS 138) (Yeast)).